The following is a 216-amino-acid chain: FMN-dependent NADH:quinone oxidoreductase 2 (216 aa).

FMN-binding positions include serine 9, 15 to 17 (SVS), 96 to 99 (MYNF), and 140 to 143 (SRGG).

The protein belongs to the azoreductase type 1 family. Homodimer. FMN serves as cofactor.

It carries out the reaction 2 a quinone + NADH + H(+) = 2 a 1,4-benzosemiquinone + NAD(+). It catalyses the reaction N,N-dimethyl-1,4-phenylenediamine + anthranilate + 2 NAD(+) = 2-(4-dimethylaminophenyl)diazenylbenzoate + 2 NADH + 2 H(+). Quinone reductase that provides resistance to thiol-specific stress caused by electrophilic quinones. Functionally, also exhibits azoreductase activity. Catalyzes the reductive cleavage of the azo bond in aromatic azo compounds to the corresponding amines. In Xanthomonas axonopodis pv. citri (strain 306), this protein is FMN-dependent NADH:quinone oxidoreductase 2.